Reading from the N-terminus, the 426-residue chain is Endothelin-1 receptor (426 aa).

Residues M1–A20 form the signal peptide. Residues D21–K80 lie on the Extracellular side of the membrane. N29 and N62 each carry an N-linked (GlcNAc...) asparagine glycan. A helical transmembrane segment spans residues Y81 to L102. Topologically, residues R103–R112 are cytoplasmic. Residues N113–I132 form a helical membrane-spanning segment. Residues D133 to K159 lie on the Extracellular side of the membrane. A disulfide bond links C158 and C239. Residues L160–V181 traverse the membrane as a helical segment. The Cytoplasmic segment spans residues D182–E205. The helical transmembrane segment at I206–F229 threads the bilayer. The Extracellular segment spans residues E230–D256. The chain crosses the membrane as a helical span at residues W257–M278. Residues T279 to K306 lie on the Cytoplasmic side of the membrane. The helical transmembrane segment at T307 to L328 threads the bilayer. Residues K329 to L347 lie on the Extracellular side of the membrane. Residues L348–V372 form a helical membrane-spanning segment. Residues S373–N426 are Cytoplasmic-facing. At S424 the chain carries Phosphoserine.

It belongs to the G-protein coupled receptor 1 family. Endothelin receptor subfamily. EDNRA sub-subfamily. In terms of assembly, interacts with HDAC7 and KAT5. As to expression, predominantly expressed in vascular smooth muscle cells of a variety of issues, bronchial smooth muscle cells, myocardium, and the pituitary gland.

It localises to the cell membrane. Its function is as follows. Receptor for endothelin-1. Mediates its action by association with G proteins that activate a phosphatidylinositol-calcium second messenger system. The rank order of binding affinities for ET-A is: ET1 &gt; ET2 &gt;&gt; ET3. In Rattus norvegicus (Rat), this protein is Endothelin-1 receptor.